Here is an 828-residue protein sequence, read N- to C-terminus: Beta-galactosidase (828 aa).

An N-terminal signal peptide occupies residues 1–20; that stretch reads MKMKQFNLLSLFLILITSFG. N-linked (GlcNAc...) asparagine glycosylation is found at N23 and N153. E183 (proton donor) is an active-site residue. The active-site Nucleophile is E252. N-linked (GlcNAc...) asparagine glycans are attached at residues N253, N350, N379, N492, N667, N799, and N803. The 87-residue stretch at 742–828 folds into the SUEL-type lectin domain; that stretch reads AHEHNKVELS…PKRLFVEVEC (87 aa).

This sequence belongs to the glycosyl hydrolase 35 family.

Its subcellular location is the secreted. It localises to the extracellular space. The protein localises to the apoplast. The enzyme catalyses Hydrolysis of terminal non-reducing beta-D-galactose residues in beta-D-galactosides.. This chain is Beta-galactosidase, found in Brassica oleracea (Wild cabbage).